Here is a 269-residue protein sequence, read N- to C-terminus: Enoyl-[acyl-carrier-protein] reductase [NADH] (269 aa).

Residues 20 to 21 (SI), 64 to 65 (DV), and 95 to 96 (IG) each bind NAD(+). Y158 is a binding site for substrate. NAD(+) is bound by residues K165 and I194.

This sequence belongs to the short-chain dehydrogenases/reductases (SDR) family. FabI subfamily. In terms of assembly, homodimer. Homotetramer.

The enzyme catalyses a 2,3-saturated acyl-[ACP] + NAD(+) = a (2E)-enoyl-[ACP] + NADH + H(+). The catalysed reaction is a 2,3-saturated acyl-CoA + NAD(+) = a (2E)-enoyl-CoA + NADH + H(+). Its pathway is lipid metabolism; mycolic acid biosynthesis. Enoyl-ACP reductase of the type II fatty acid syntase (FAS-II) system, which is involved in the biosynthesis of mycolic acids, a major component of mycobacterial cell walls. Catalyzes the NADH-dependent reduction of the double bond of 2-trans-enoyl-[acyl-carrier protein], an essential step in the fatty acid elongation cycle of the FAS-II pathway. Shows preference for long-chain fatty acyl thioester substrates, and can also use 2-trans-enoyl-CoAs as alternative substrates. The mycobacterial FAS-II system utilizes the products of the FAS-I system as primers to extend fatty acyl chain lengths up to C56, forming the meromycolate chain that serves as the precursor for final mycolic acids. Functionally, is the primary target of the first-line antitubercular drug isoniazid (INH) and of the second-line drug ethionamide (ETH). Overexpressed inhA confers INH and ETH resistance to M.bovis. The mechanism of isoniazid action against InhA is covalent attachment of the activated form of the drug to the nicotinamide ring of NAD and binding of the INH-NAD adduct to the active site of InhA. Similarly, the ETH-NAD adduct binds InhA. This Mycobacterium bovis (strain ATCC BAA-935 / AF2122/97) protein is Enoyl-[acyl-carrier-protein] reductase [NADH].